Reading from the N-terminus, the 495-residue chain is Probable cytochrome P450 513C1 (495 aa).

The chain crosses the membrane as a helical span at residues 1–21; it reads MNYLVLILVSLVSIYFLFIKN. C441 lines the heme pocket.

The protein belongs to the cytochrome P450 family. It depends on heme as a cofactor.

Its subcellular location is the membrane. This chain is Probable cytochrome P450 513C1 (cyp513C1), found in Dictyostelium discoideum (Social amoeba).